Consider the following 418-residue polypeptide: Metal tolerance protein 1 (418 aa).

Residues 1-56 (MDSHNSAPPQIAEVRMDISSSTSVAAGNKVCRGAACDFSDSSNSSKDARERMASMR) are Cytoplasmic-facing. A helical membrane pass occupies residues 57 to 77 (KLIIAVILCIIFMAVEVVGGI). Topologically, residues 78-89 (KANSLAILTDAA) are vacuolar. Residues 90–110 (HLLSDVAAFAISLFSLWAAGW) traverse the membrane as a helical segment. The Cytoplasmic portion of the chain corresponds to 111 to 122 (EATPQQSYGFFR). A helical transmembrane segment spans residues 123 to 143 (IEILGALVSIQLIWLLAGILV). The Vacuolar segment spans residues 144 to 160 (YEAIVRLINESGEVQGS). The chain crosses the membrane as a helical span at residues 161–181 (LMFAVSAFGLFVNIIMAVLLG). The segment at 182-246 (HDHGHGHGHG…HHPGTGHHHH (65 aa)) is required for zinc-binding. Residues 182 to 282 (HDHGHGHGHG…RRNINVHSAY (101 aa)) are Cytoplasmic-facing. Residues 186-248 (HGHGHGHGHG…PGTGHHHHDA (63 aa)) form a disordered region. Positions 196 to 227 (HSHDHDHGGSDHDHHHHEDQEHGHVHHHEDGH) are enriched in basic and acidic residues. The segment covering 235–245 (LHHHPGTGHHH) has biased composition (basic residues). The helical transmembrane segment at 283-303 (LHVLGDSIQSIGVMIGGAIIW) threads the bilayer. Topologically, residues 304–307 (YKPE) are vacuolar. Residues 308 to 328 (WKIIDLICTLIFSVIVLFTTI) form a helical membrane-spanning segment. The Cytoplasmic portion of the chain corresponds to 329–418 (KMLRNILEVL…SHVTIQIERE (90 aa)).

It belongs to the cation diffusion facilitator (CDF) transporter (TC 2.A.4) family. SLC30A subfamily.

Its subcellular location is the vacuole membrane. Functionally, involved in sequestration of excess zinc in the cytoplasm into vacuoles to maintain zinc homeostasis. The protein is Metal tolerance protein 1 (MTP1) of Oryza sativa subsp. japonica (Rice).